The following is a 71-amino-acid chain: Putative membrane protein insertion efficiency factor (71 aa).

The protein belongs to the UPF0161 family.

It localises to the cell membrane. Its function is as follows. Could be involved in insertion of integral membrane proteins into the membrane. In Acetivibrio thermocellus (strain ATCC 27405 / DSM 1237 / JCM 9322 / NBRC 103400 / NCIMB 10682 / NRRL B-4536 / VPI 7372) (Clostridium thermocellum), this protein is Putative membrane protein insertion efficiency factor.